A 616-amino-acid polypeptide reads, in one-letter code: MMVKLRNLVLFFMLLTVVAHILLYTDPAASFKTPFSKRDFLEDVTALTFNSDENRLNLLPRESPAVLRGGLVGAVYSDKNSRRLDQLSARVLSATDDDTHSHTDISIKQVTHDAASDSHINRENMHVQLTQQTSEKVDEQPEPNAFGAKKDTGNVLMPDAQVRHLKDQLIRAKVYLSLPSAKANAHFVRELRLRIKEVQRALADASKDSDLPKTAIEKLKAMEQTLAKGKQIQDDCSTVVKKLRAMLHSADEQLRVHKKQTMFLTQLTAKTIPKGLHCLPLRLTTDYYALNSSEQQFPNQEKLEDTQLYHYALFSDNVLATSVVVNSTITNAKHPLKHVFHIVTDRLNYAAMRMWFLDNPPGKATIQVQNVEEFTWLNSSYSPVLKQLSSRSMIDYYFRAHHTNSDTNLKFRNPKYLSILNHLRFYLPEIFPKLSKVLFLDDDIVVQKDLSGLWSVDLKGNVNGAVETCGESFHRFDRYLNFSNPLISKNFDPRACGWAYGMNVFDLDEWKRQNITEVYHRWQDLNQDRELWKLGTLPPGLITFWRRTYPLDRKWHILGLGYNPSVNQRDIERAAVIHYNGNLKPWLEIGIPRYRGFWSKHVDYEHVYLRECNINP.

At 1-6 (MMVKLR) the chain is on the cytoplasmic side. A helical; Signal-anchor for type II membrane protein transmembrane segment spans residues 7-29 (NLVLFFMLLTVVAHILLYTDPAA). Residues 30 to 616 (SFKTPFSKRD…VYLRECNINP (587 aa)) lie on the Lumenal side of the membrane. The tract at residues 132 to 152 (QTSEKVDEQPEPNAFGAKKDT) is disordered. N-linked (GlcNAc...) asparagine glycans are attached at residues Asn-291, Asn-326, Asn-378, Asn-481, and Asn-514.

It belongs to the glycosyltransferase 8 family. As to expression, expressed in roots, inflorescences, siliques, leaves and stems.

It localises to the golgi apparatus membrane. Its pathway is glycan metabolism; pectin biosynthesis. Its function is as follows. May be involved in pectin and/or xylans biosynthesis in cell walls. The protein is Probable galacturonosyltransferase 4 (GAUT4) of Arabidopsis thaliana (Mouse-ear cress).